The sequence spans 105 residues: Putative RNA-binding protein RbpF (105 aa).

Residues 2 to 79 (SIYVGNLSYE…RDLKVNKAKP (78 aa)) enclose the RRM domain. A compositionally biased stretch (basic and acidic residues) spans 75 to 84 (NKAKPKEDRG). Residues 75–105 (NKAKPKEDRGSFGGGNRGGYGGGGGGGRSRY) are disordered. Residues 85-105 (SFGGGNRGGYGGGGGGGRSRY) show a composition bias toward gly residues.

The chain is Putative RNA-binding protein RbpF (rbpF) from Nostoc sp. (strain PCC 7120 / SAG 25.82 / UTEX 2576).